Reading from the N-terminus, the 366-residue chain is Ferrochelatase (366 aa).

Positions 210 and 293 each coordinate Fe cation.

This sequence belongs to the ferrochelatase family.

The protein resides in the cytoplasm. The enzyme catalyses heme b + 2 H(+) = protoporphyrin IX + Fe(2+). It functions in the pathway porphyrin-containing compound metabolism; protoheme biosynthesis; protoheme from protoporphyrin-IX: step 1/1. In terms of biological role, catalyzes the ferrous insertion into protoporphyrin IX. The chain is Ferrochelatase from Leptospira borgpetersenii serovar Hardjo-bovis (strain JB197).